Reading from the N-terminus, the 303-residue chain is Porphobilinogen deaminase (303 aa).

Residue cysteine 240 is modified to S-(dipyrrolylmethanemethyl)cysteine.

This sequence belongs to the HMBS family. In terms of assembly, monomer. It depends on dipyrromethane as a cofactor.

It catalyses the reaction 4 porphobilinogen + H2O = hydroxymethylbilane + 4 NH4(+). It participates in porphyrin-containing compound metabolism; protoporphyrin-IX biosynthesis; coproporphyrinogen-III from 5-aminolevulinate: step 2/4. Functionally, tetrapolymerization of the monopyrrole PBG into the hydroxymethylbilane pre-uroporphyrinogen in several discrete steps. This chain is Porphobilinogen deaminase, found in Stenotrophomonas maltophilia (strain K279a).